Consider the following 119-residue polypeptide: Nascent polypeptide-associated complex protein (119 aa).

In terms of domain architecture, NAC-A/B spans Arg-5–Gly-73.

This sequence belongs to the NAC-alpha family. In terms of assembly, homodimer. Interacts with the ribosome. Binds ribosomal RNA.

Its function is as follows. Contacts the emerging nascent chain on the ribosome. The sequence is that of Nascent polypeptide-associated complex protein from Thermoplasma volcanium (strain ATCC 51530 / DSM 4299 / JCM 9571 / NBRC 15438 / GSS1).